The following is a 1038-amino-acid chain: MFKQKLKMKPKIKRNCTFSGLAFILMLLFSSFTVNNLNAQSEVTGTIMGEDGIPIPGVNVIQKGTKNGTVTDFDGRYSVTLVPGQLVLVYSYIGYETQEVPIKSRKVIDLTLKAELQSLDEVVVIGYGEQKRADVIGAVGSVDSEELSSVSPVDALQGIQGRVAGVQVTTNGGPGGDSEIIIRGISTFGAGSSPLYVVDGQQVNDITNINPADIESMDILKDGASAAIYGSKSANGVVLITTKQGKPGFPKMTVDYISSVSFLNNLVPVSNTRQWNKFESLRTGSTDASGQVEDSLGIRSQLVVDVQDAIKQLGVKNQVNLAFSGGGEKSKFYWNTGYLDETGIVKGSGYNRITSNLKIDFDLNKFITAGTRMTGTYQMQDGINEGSVFRNLSYRQPNVLLVDFDGSYIRERYARNNPLARAELQVNDNRQFSSTIFNYISVKLAPGLTFKTTLGFNYRNQKLNQFNPQETVNIDNGKINGRERVNTFYDFQNENFFNYNKTFNDKHTVTGLAGFSIQRWWYEYSDLNAIEFNNDYIQTFNNVKEYNLNTTGTDATTHALSSLYARIGYDYKSKYLITASIRRDGSSRFGENRIWGNFPAIQLGWKISEENFMKSLGFINLLKLRASYAITGNERIGDFESIALYNPGFFYNSVNGFAPVQLGNGDLGWEETAQQNYGIDLSLFKRRLNVSVDRYVKTTDDLLYNVPIPQETGFSNIRANIGSVENRGWEVSIAAKPIRNERFTWTTSFNFSYNENEVLELADEDGFETGGYLIEEGESLGNMYGYKNLGVFQYDESNAFTPDGIRLTPNFDANQNFVNYTLNGQAYNGDIERLKFANKVLRGGDIIFQDQNGDFNIDAANDRTIIGNGLSDFAGGFSNRFDYNGFFFSFLFNYNFGNDIYRDYDHIRDKASNAVYAPSPDRIDGAWVNPGDITKYPSLEVSRANNRSGYESNYVSSADFISLRNIQLGYSFNPDTLNKLGFINRLSLNASINNVFMFTNYEGYNPELGNRGNALEPGWDSLRYPNQTEIVIGLNVEF.

The signal sequence occupies residues 1-39; sequence MFKQKLKMKPKIKRNCTFSGLAFILMLLFSSFTVNNLNA. A TonB box motif is present at residues 120 to 127; that stretch reads DEVVVIGY. The TBDR plug domain occupies 131–243; that stretch reads KRADVIGAVG…ANGVVLITTK (113 aa). Residues 249–1038 form the TBDR beta-barrel domain; it reads FPKMTVDYIS…EIVIGLNVEF (790 aa). The TonB C-terminal box signature appears at 1021–1038; the sequence is SLRYPNQTEIVIGLNVEF.

The protein belongs to the TonB-dependent receptor family.

Its subcellular location is the cell outer membrane. Its function is as follows. TonB-dependent receptor probably involved in ulvan degradation. Ulvan is the main polysaccharide component of the Ulvales (green seaweed) cell wall. It is composed of disaccharide building blocks comprising 3-sulfated rhamnose (Rha3S) linked to D-glucuronic acid (GlcA), L-iduronic acid (IduA), or D-xylose (Xyl). The TonB-dependent receptor may mediate transport of ulvan oligosaccharides from the surface of the outer membrane to the periplasm for subsequent degradation. This Formosa agariphila (strain DSM 15362 / KCTC 12365 / LMG 23005 / KMM 3901 / M-2Alg 35-1) protein is TonB-dependent receptor P39.